The sequence spans 349 residues: METNFSIPLNETEEVLPEPAGHTVLWIFSLLVHGVTFIFGVLGNGLVIWVAGFLMTRTVNTICYLNLALADFSFSAILPFHMVSVAMREKWPFGSFLCKLVHVMIDINLFVSVYLITIIALDRCICVLHPAWAQNHRTMSLAKRVMTGLWILTIVLTLPNFIFWTTISTTNGDTYCIFNFPFWGDTAVERLNVFITMAKVFLILHFIIGFSMPMSIITVCYGIIAAKIHRNHMIKSSRPLRVFAAVVASFFICWFPYELIGILMAVWLKEMLLNGKYKIILVLINPTSSLAFFNSCLNPILYVFLGSNFQERLIRSLPTSLERALTEVPDSAQTSNTHTTSASPPEETE.

Residues 1-27 (METNFSIPLNETEEVLPEPAGHTVLWI) lie on the Extracellular side of the membrane. Residues Asn4 and Asn10 are each glycosylated (N-linked (GlcNAc...) asparagine). A helical membrane pass occupies residues 28-50 (FSLLVHGVTFIFGVLGNGLVIWV). At 51-61 (AGFLMTRTVNT) the chain is on the cytoplasmic side. Residues 62 to 83 (ICYLNLALADFSFSAILPFHMV) form a helical membrane-spanning segment. At 84–100 (SVAMREKWPFGSFLCKL) the chain is on the extracellular side. An intrachain disulfide couples Cys98 to Cys176. A helical transmembrane segment spans residues 101 to 121 (VHVMIDINLFVSVYLITIIAL). At 122 to 140 (DRCICVLHPAWAQNHRTMS) the chain is on the cytoplasmic side. A helical membrane pass occupies residues 141–162 (LAKRVMTGLWILTIVLTLPNFI). Residues 163–205 (FWTTISTTNGDTYCIFNFPFWGDTAVERLNVFITMAKVFLILH) are Extracellular-facing. The helical transmembrane segment at 206-226 (FIIGFSMPMSIITVCYGIIAA) threads the bilayer. Topologically, residues 227–242 (KIHRNHMIKSSRPLRV) are cytoplasmic. The helical transmembrane segment at 243 to 266 (FAAVVASFFICWFPYELIGILMAV) threads the bilayer. Residues 267–286 (WLKEMLLNGKYKIILVLINP) are Extracellular-facing. The helical transmembrane segment at 287–306 (TSSLAFFNSCLNPILYVFLG) threads the bilayer. At 307–349 (SNFQERLIRSLPTSLERALTEVPDSAQTSNTHTTSASPPEETE) the chain is on the cytoplasmic side. Residues 327 to 349 (EVPDSAQTSNTHTTSASPPEETE) are disordered. Positions 331 to 343 (SAQTSNTHTTSAS) are enriched in polar residues.

The protein belongs to the G-protein coupled receptor 1 family.

The protein resides in the cell membrane. Low affinity receptor for N-formyl-methionyl peptides, which are powerful neutrophils chemotactic factors. Binding of FMLP to the receptor causes activation of neutrophils. This response is mediated via a G-protein that activates a phosphatidylinositol-calcium second messenger system. The sequence is that of N-formyl peptide receptor 3 (FPR3) from Gorilla gorilla gorilla (Western lowland gorilla).